Reading from the N-terminus, the 67-residue chain is Large ribosomal subunit protein bL32 (67 aa).

Positions 1–19 are enriched in basic residues; that stretch reads MAVPKRKMSRSNTRARRSQ. The segment at 1–21 is disordered; it reads MAVPKRKMSRSNTRARRSQWK.

Belongs to the bacterial ribosomal protein bL32 family.

The sequence is that of Large ribosomal subunit protein bL32 from Clavibacter sepedonicus (Clavibacter michiganensis subsp. sepedonicus).